A 377-amino-acid polypeptide reads, in one-letter code: Phytanoyl-CoA hydroxylase-interacting protein-like (377 aa).

The 110-residue stretch at 52–161 (VPQNIKISNI…EINEFCTADY (110 aa)) folds into the Fibronectin type-III domain.

This sequence belongs to the PHYHIP family.

In terms of biological role, may play a role in the development of the central system. The polypeptide is Phytanoyl-CoA hydroxylase-interacting protein-like (phyhipl) (Danio rerio (Zebrafish)).